Consider the following 291-residue polypeptide: E3 ubiquitin-protein ligase MARCHF8 (291 aa).

Positions 22–72 (YRSKTKEKEREEQNEKTLGHFMSHSSNISKAGSPPSASAPAPVSSFSRTSI) are disordered. Residues 25–39 (KTKEKEREEQNEKTL) show a composition bias toward basic and acidic residues. A compositionally biased stretch (low complexity) spans 50 to 72 (SKAGSPPSASAPAPVSSFSRTSI). An RING-CH-type zinc finger spans residues 72 to 133 (ITPSSQDICR…ELCKYEFIME (62 aa)). Positions 80, 83, 97, 99, 107, 110, 123, and 126 each coordinate Zn(2+). The next 2 helical transmembrane spans lie at 157–177 (CSVT…YVLI) and 197–217 (FWTK…FMYV). Serine 253 carries the phosphoserine modification.

In terms of assembly, interacts with CD86. Broadly expressed. Present in immature dendritic cells (at protein level).

It is found in the golgi apparatus membrane. Its subcellular location is the endoplasmic reticulum membrane. It localises to the cytoplasmic vesicle membrane. The protein localises to the lysosome membrane. The protein resides in the early endosome membrane. It catalyses the reaction S-ubiquitinyl-[E2 ubiquitin-conjugating enzyme]-L-cysteine + [acceptor protein]-L-lysine = [E2 ubiquitin-conjugating enzyme]-L-cysteine + N(6)-ubiquitinyl-[acceptor protein]-L-lysine.. It participates in protein modification; protein ubiquitination. E3 ubiquitin-protein ligase that plays several important roles in innate immunity and adaptive immunity. Mediates ubiquitination of CD86 and MHC class II proteins, such as HLA-DR alpha and beta, and promotes their subsequent endocytosis and sorting to lysosomes via multivesicular bodies. Possesses a very broad antiviral activity by specifically inactivating different viral fusion proteins. Targets and ubiquitinates cytoplasmic lysine residues of viral envelope glycoproteins with single transmembrane domains leading to their lysosomal degradation. Therefore, shows broad-spectrum inhibition against many viruses including retroviruses, rhabdoviruses, arenaviruses, sarbecoviruses or influenzaviruses. Strongly blocks human immunodeficiency virus type 1 envelope glycoprotein incorporation into virions by down-regulating its cell surface expression. Also blocks ebola virus glycoprotein/GP incorporation via surface down-regulation. Mediates 'Lys-63'-linked polyubiquitination of influenza M2 to target it to lysosome for degradation. Mediates the regulation of constitutive ubiquitination and trafficking of the viral restriction factor BST2 within the endocytic pathway. Plays a role in maintenance of immune tolerance to self by promoting the turnover and proteasomal degradation of PD-L1/CD274 via ubiquitination. Catalyzes the 'Lys-63'-linked polyubiquitylation of cGAS thereby inhibiting its DNA binding ability and impairing its antiviral innate immunity. Negatively regulates IL7-mediated T-cell homeostasis by mediating 'Lys-27'-linked polyubiquitination of IL7R, leading to its lysosomal degradation. Functionally, (Microbial infection) Mediates 'Lys-63'-linked polyubiquitination of hepatitis C virus/HCV protein NS2 which allows its binding to HGS, an ESCRT-0 complex component, and this interaction is essential for HCV envelopment. The protein is E3 ubiquitin-protein ligase MARCHF8 of Homo sapiens (Human).